Here is a 385-residue protein sequence, read N- to C-terminus: GPN-loop GTPase 1 (385 aa).

A GTP-binding site is contributed by 13-18 (GSGKTT). The short motif at 70–72 (GPN) is the Gly-Pro-Asn (GPN)-loop; involved in dimer interface element. GTP is bound at residue 173–176 (NKTD). Residues Ser-304, Ser-308, and Ser-313 each carry the phosphoserine modification. Residues 317–332 (EDANDGLVDRDEDEGV) are compositionally biased toward acidic residues. Positions 317–356 (EDANDGLVDRDEDEGVEREYTFPGEERTKGEVNENSAPDL) are disordered. The segment covering 333–348 (EREYTFPGEERTKGEV) has biased composition (basic and acidic residues). A Phosphoserine modification is found at Ser-352. Lys-369 is covalently cross-linked (Glycyl lysine isopeptide (Lys-Gly) (interchain with G-Cter in ubiquitin)).

It belongs to the GPN-loop GTPase family. In terms of assembly, heterodimers with GPN2 or GPN3. Binds to RNA polymerase II (RNAPII) in a GTP-dependent manner. Interacts with nuclear pore protein NUP133 and nuclear export factor CRM1. Interacts with PCL1. In terms of processing, phosphorylated by the cyclin-CDK PCL1-PHO85.

The protein resides in the cytoplasm. Functionally, small GTPase required for proper nuclear import of RNA polymerase II (RNAPII). May act at an RNAP assembly step prior to nuclear import. Promotes sister chromatid separation during anaphase. The chain is GPN-loop GTPase 1 from Saccharomyces cerevisiae (strain ATCC 204508 / S288c) (Baker's yeast).